The following is a 563-amino-acid chain: Phosphomethylpyrimidine synthase (563 aa).

Substrate-binding positions include Asn-180, Met-209, Tyr-238, His-274, 294–296 (SRG), 335–338 (DGLR), and Glu-374. His-378 provides a ligand contact to Zn(2+). Substrate is bound at residue Tyr-401. Position 442 (His-442) interacts with Zn(2+). [4Fe-4S] cluster contacts are provided by Cys-522, Cys-525, and Cys-530.

This sequence belongs to the ThiC family. Requires [4Fe-4S] cluster as cofactor.

It catalyses the reaction 5-amino-1-(5-phospho-beta-D-ribosyl)imidazole + S-adenosyl-L-methionine = 4-amino-2-methyl-5-(phosphooxymethyl)pyrimidine + CO + 5'-deoxyadenosine + formate + L-methionine + 3 H(+). It participates in cofactor biosynthesis; thiamine diphosphate biosynthesis. In terms of biological role, catalyzes the synthesis of the hydroxymethylpyrimidine phosphate (HMP-P) moiety of thiamine from aminoimidazole ribotide (AIR) in a radical S-adenosyl-L-methionine (SAM)-dependent reaction. This chain is Phosphomethylpyrimidine synthase, found in Geobacillus thermodenitrificans (strain NG80-2).